Reading from the N-terminus, the 247-residue chain is Protein IRON-RELATED TRANSCRIPTION FACTOR 2 (247 aa).

The Nuclear localization signal motif lies at 68-75 (HRKLSHNA). The segment at 68–81 (HRKLSHNAYERDRR) is basic motif. One can recognise a bHLH domain in the interval 68-119 (HRKLSHNAYERDRRKQLNELYSSLRALLPDADHTKLSIPTTVSRVLKYIPEL). The helix-loop-helix motif stretch occupies residues 82-119 (KQLNELYSSLRALLPDADHTKLSIPTTVSRVLKYIPEL).

The protein belongs to the bHLH protein family. Forms homodimers. Interacts with BHLH156 in the nucleus. As to expression, expressed constitutively at low levels in the roots. Also observed in flowers, developing seeds, embryos and vascular bundles.

Its subcellular location is the nucleus. It is found in the cytoplasm. Transcription activator that binds to the DNA motif 5'-CACGTGG-3' in the promoter of iron (Fe) deficiency-inducible genes as well as of genes involved in iron homeostasis, thus contributing to basal tolerance to iron deficiency, iron uptake from soil and iron transport, particularly during seed maturation and germination. Promotes the accumulation of mugineic acid family phytosiderophores (MAs). Required for ethylene-mediated signaling during iron deficiency responses. Improves growth and yield, especially in calcareous soil with low iron availability. Promotes iron concentration in shoots and grain. This chain is Protein IRON-RELATED TRANSCRIPTION FACTOR 2, found in Oryza sativa subsp. japonica (Rice).